The chain runs to 147 residues: Ribonuclease H (147 aa).

Mg(2+) contacts are provided by aspartate 8, glutamate 46, aspartate 68, and aspartate 132.

It belongs to the RNase H family. In terms of assembly, monomer. Requires Mg(2+) as cofactor.

It is found in the cytoplasm. It catalyses the reaction Endonucleolytic cleavage to 5'-phosphomonoester.. Functionally, endonuclease that specifically degrades the RNA of RNA-DNA hybrids. The protein is Ribonuclease H of Geotalea uraniireducens (strain Rf4) (Geobacter uraniireducens).